A 533-amino-acid polypeptide reads, in one-letter code: Probable DNA ligase (533 aa).

Glutamate 211 is an ATP binding site. The active-site N6-AMP-lysine intermediate is the lysine 213. Residues arginine 218, arginine 233, glutamate 262, phenylalanine 302, arginine 374, and lysine 380 each coordinate ATP. Residues 512–533 (LAGEAAEKGQAEGGGEELEDDG) form a disordered region.

It belongs to the ATP-dependent DNA ligase family. It depends on Mg(2+) as a cofactor.

The catalysed reaction is ATP + (deoxyribonucleotide)n-3'-hydroxyl + 5'-phospho-(deoxyribonucleotide)m = (deoxyribonucleotide)n+m + AMP + diphosphate.. In terms of biological role, DNA ligase that seals nicks in double-stranded DNA during DNA replication, DNA recombination and DNA repair. The chain is Probable DNA ligase from Sorangium cellulosum (strain So ce56) (Polyangium cellulosum (strain So ce56)).